Here is a 365-residue protein sequence, read N- to C-terminus: 3-isopropylmalate dehydrogenase (365 aa).

4 residues coordinate substrate: Arg-96, Arg-106, Arg-134, and Asp-224. Residues Asp-224, Asp-248, and Asp-252 each coordinate Mg(2+). Residue 288–300 coordinates NAD(+); the sequence is GSAPTIAKQNIAN.

This sequence belongs to the isocitrate and isopropylmalate dehydrogenases family. LeuB type 1 subfamily. As to quaternary structure, homodimer. It depends on Mg(2+) as a cofactor. The cofactor is Mn(2+).

The protein localises to the cytoplasm. It catalyses the reaction (2R,3S)-3-isopropylmalate + NAD(+) = 4-methyl-2-oxopentanoate + CO2 + NADH. It functions in the pathway amino-acid biosynthesis; L-leucine biosynthesis; L-leucine from 3-methyl-2-oxobutanoate: step 3/4. In terms of biological role, catalyzes the oxidation of 3-carboxy-2-hydroxy-4-methylpentanoate (3-isopropylmalate) to 3-carboxy-4-methyl-2-oxopentanoate. The product decarboxylates to 4-methyl-2 oxopentanoate. This Dehalococcoides mccartyi (strain CBDB1) protein is 3-isopropylmalate dehydrogenase.